Reading from the N-terminus, the 109-residue chain is Flagellar hook-basal body complex protein FliE (109 aa).

It belongs to the FliE family.

It localises to the bacterial flagellum basal body. The chain is Flagellar hook-basal body complex protein FliE from Nitrosomonas eutropha (strain DSM 101675 / C91 / Nm57).